The sequence spans 262 residues: ATP synthase subunit a (262 aa).

Transmembrane regions (helical) follow at residues 26–46, 86–106, 130–150, 204–226, and 240–260; these read VHID…FVFS, VAPL…IDLI, DISA…FYTI, LIFI…GIPL, and LQAF…YNKA.

It belongs to the ATPase A chain family. F-type ATPases have 2 components, CF(1) - the catalytic core - and CF(0) - the membrane proton channel. CF(1) has five subunits: alpha(3), beta(3), gamma(1), delta(1), epsilon(1). CF(0) has three main subunits: a(1), b(2) and c(9-12). The alpha and beta chains form an alternating ring which encloses part of the gamma chain. CF(1) is attached to CF(0) by a central stalk formed by the gamma and epsilon chains, while a peripheral stalk is formed by the delta and b chains.

Its subcellular location is the cell inner membrane. Key component of the proton channel; it plays a direct role in the translocation of protons across the membrane. This chain is ATP synthase subunit a, found in Haemophilus influenzae (strain 86-028NP).